We begin with the raw amino-acid sequence, 171 residues long: Ribosome maturation factor RimM (171 aa).

The region spanning 97 to 170 is the PRC barrel domain; sequence EGEYYYHEII…LVTIHVMEGL (74 aa).

Belongs to the RimM family. Binds ribosomal protein uS19.

The protein localises to the cytoplasm. Functionally, an accessory protein needed during the final step in the assembly of 30S ribosomal subunit, possibly for assembly of the head region. Essential for efficient processing of 16S rRNA. May be needed both before and after RbfA during the maturation of 16S rRNA. It has affinity for free ribosomal 30S subunits but not for 70S ribosomes. This Bacillus cereus (strain ATCC 14579 / DSM 31 / CCUG 7414 / JCM 2152 / NBRC 15305 / NCIMB 9373 / NCTC 2599 / NRRL B-3711) protein is Ribosome maturation factor RimM.